We begin with the raw amino-acid sequence, 206 residues long: MSANELTSGDFTESGEPFKLFAEWLKEAEASEPNDPNAVALATVDEHGLPNVRMVLLKGFDDDGFVFYTNFESQKGREILGQKKAAMCFHWKSLRRQVRLRGPVEIVSDAEADAYFKTRARGSRIGAWASKQSRPLESRFALEKAVAEYTARYAIGEIPRPPHWSGFRIRPTSIEFWKDQQFRLHDRIEFRRPSPVGAWEKVRMYP.

Residues 53–58 (RMVLLK), 68–69 (YT), Lys75, and Gln97 each bind FMN. Lys58 contributes to the substrate binding site. Substrate-binding residues include Tyr115, Arg119, and Ser123. FMN-binding positions include 132-133 (QS) and Trp177. Position 183–185 (183–185 (RLH)) interacts with substrate. Residue Arg187 coordinates FMN.

The protein belongs to the pyridoxamine 5'-phosphate oxidase family. Homodimer. The cofactor is FMN.

The enzyme catalyses pyridoxamine 5'-phosphate + O2 + H2O = pyridoxal 5'-phosphate + H2O2 + NH4(+). It carries out the reaction pyridoxine 5'-phosphate + O2 = pyridoxal 5'-phosphate + H2O2. Its pathway is cofactor metabolism; pyridoxal 5'-phosphate salvage; pyridoxal 5'-phosphate from pyridoxamine 5'-phosphate: step 1/1. It functions in the pathway cofactor metabolism; pyridoxal 5'-phosphate salvage; pyridoxal 5'-phosphate from pyridoxine 5'-phosphate: step 1/1. In terms of biological role, catalyzes the oxidation of either pyridoxine 5'-phosphate (PNP) or pyridoxamine 5'-phosphate (PMP) into pyridoxal 5'-phosphate (PLP). The sequence is that of Pyridoxine/pyridoxamine 5'-phosphate oxidase from Rhizobium etli (strain ATCC 51251 / DSM 11541 / JCM 21823 / NBRC 15573 / CFN 42).